The following is a 113-amino-acid chain: Con-Ins G3b (113 aa).

The N-terminal stretch at 1–21 (MTTSFYFLLVALGLLLYVCQS) is a signal peptide. The propeptide occupies 22–29 (SFGNQHTR). Pro34 is modified (4-hydroxyproline; partial). Cystine bridges form between Cys38-Cys99, Cys50-Cys112, and Cys98-Cys103. Glu41 is subject to 4-carboxyglutamate. Position 51 is a histidine amide (His51). A propeptide spans 52–92 (GKRNDAGKKRGRASPLWQRQGFLSMLKAKRNEAFFLQRDGR) (c peptide). The residue at position 96 (Glu96) is a 4-carboxyglutamate. Residue Pro102 is modified to 4-hydroxyproline; partial.

The protein belongs to the insulin family. As to quaternary structure, heterodimer of A and B chains; disulfide-linked. Post-translationally, it is noteworthy that in this dimer, in contrast to Con-Ins G1, the chain B is amidated and not the chain A. In terms of tissue distribution, expressed by the venom gland.

The protein resides in the secreted. In terms of biological role, this venom insulin, from a fish-hunting cone snail, facilitates prey capture by rapidly inducing hypoglycemic shock. It is one of the smallest known insulin found in nature and lacks the C-terminal segment of the B chain that, in human insulin, mediates engagement of the insulin receptor (INSR) and assembly of the hormone's hexameric storage form. Despite lacking this segment, it both binds and activates human insulin receptor (long isoform (HIR-B)) with only a 10-fold lower potency. In vivo, intraperitoneal injection of this peptide into zebrafish lowers blood glucose with the same potency than human insulin. In addition, when applied to water, this peptide reduces overall locomotor activity of zebrafish larvae, observed as a significant decrease in the percentage of time spent swimming and movement frequency. This Conus geographus (Geography cone) protein is Con-Ins G3b.